The sequence spans 126 residues: Nascent polypeptide-associated complex protein (126 aa).

The region spanning 10 to 77 (PRMMKQMQKM…AKKVAKAEEK (68 aa)) is the NAC-A/B domain.

It belongs to the NAC-alpha family. Homodimer. Interacts with the ribosome. Binds ribosomal RNA.

In terms of biological role, contacts the emerging nascent chain on the ribosome. This Methanococcus maripaludis (strain C6 / ATCC BAA-1332) protein is Nascent polypeptide-associated complex protein.